The sequence spans 1105 residues: Ran-binding protein 6 (1105 aa).

At Ala-2 the chain carries N-acetylalanine. HEAT repeat units lie at residues 219–257 (FKDFADLLPGILQAVNDSCYQDDDSVLESLVEIADTVPK), 361–399 (KVVLPMTKEHIMQMLQSPDWKCRHAGLMALSAIGEGCHQ), 402–440 (EPILDETVNSVLLFLQDPHPRVRAAACTTLGQMATDFAP), 444–483 (KKFHEIVITALLRTMENQGNQRVQSHAASALVIFIEDCPK), 866–905 (LPWFEQLLPLIVNLICSSRPWPDRQWGLCIFDDIIEHCSP), 908–946 (FKYVEYFRWPMLLNMRDNNPEVRQAAAYGLGVMAQFGGD), and 949–987 (RSLCSEAVPLLVKVIKCANSKTKKNVIATENCISAIGKI).

This sequence belongs to the importin beta family.

It localises to the cytoplasm. The protein localises to the nucleus. In terms of biological role, may function in nuclear protein import as nuclear transport receptor. This is Ran-binding protein 6 (Ranbp6) from Mus musculus (Mouse).